Here is a 303-residue protein sequence, read N- to C-terminus: Mycothiol acetyltransferase (303 aa).

2 consecutive N-acetyltransferase domains span residues 1–150 (MALL…RPLD) and 162–303 (VTIR…QFGR). A 1D-myo-inositol 2-(L-cysteinylamino)-2-deoxy-alpha-D-glucopyranoside-binding site is contributed by Glu18. 77-79 (LAV) contributes to the acetyl-CoA binding site. 1D-myo-inositol 2-(L-cysteinylamino)-2-deoxy-alpha-D-glucopyranoside-binding residues include Glu189, Lys229, and Glu237. Acetyl-CoA is bound by residues 241 to 243 (VGV) and 248 to 254 (QGNGLGR). 1D-myo-inositol 2-(L-cysteinylamino)-2-deoxy-alpha-D-glucopyranoside is bound at residue Tyr275. 280–285 (NTAAIK) provides a ligand contact to acetyl-CoA.

It belongs to the acetyltransferase family. MshD subfamily. In terms of assembly, monomer.

It catalyses the reaction 1D-myo-inositol 2-(L-cysteinylamino)-2-deoxy-alpha-D-glucopyranoside + acetyl-CoA = mycothiol + CoA + H(+). Functionally, catalyzes the transfer of acetyl from acetyl-CoA to desacetylmycothiol (Cys-GlcN-Ins) to form mycothiol. The sequence is that of Mycothiol acetyltransferase from Saccharopolyspora erythraea (strain ATCC 11635 / DSM 40517 / JCM 4748 / NBRC 13426 / NCIMB 8594 / NRRL 2338).